A 64-amino-acid chain; its full sequence is Large ribosomal subunit protein uL29 (64 aa).

Belongs to the universal ribosomal protein uL29 family.

The chain is Large ribosomal subunit protein uL29 from Psychrobacter sp. (strain PRwf-1).